A 66-amino-acid chain; its full sequence is Large ribosomal subunit protein bL33c (66 aa).

Belongs to the bacterial ribosomal protein bL33 family.

It localises to the plastid. Its subcellular location is the chloroplast. The polypeptide is Large ribosomal subunit protein bL33c (Welwitschia mirabilis (Tree tumbo)).